The following is a 459-amino-acid chain: Bifunctional protein GlmU (459 aa).

Residues M1–R228 are pyrophosphorylase. UDP-N-acetyl-alpha-D-glucosamine is bound by residues L8–G11, K22, Q72, and G77–T78. D101 contacts Mg(2+). G138, E153, N168, and N226 together coordinate UDP-N-acetyl-alpha-D-glucosamine. A Mg(2+)-binding site is contributed by N226. The linker stretch occupies residues V229–N249. Residues G250 to K459 form an N-acetyltransferase region. 2 residues coordinate UDP-N-acetyl-alpha-D-glucosamine: R331 and K349. H361 serves as the catalytic Proton acceptor. Y364 and N375 together coordinate UDP-N-acetyl-alpha-D-glucosamine. Residues N384–Y385, S403, T421, and R438 each bind acetyl-CoA.

It in the N-terminal section; belongs to the N-acetylglucosamine-1-phosphate uridyltransferase family. This sequence in the C-terminal section; belongs to the transferase hexapeptide repeat family. Homotrimer. It depends on Mg(2+) as a cofactor.

Its subcellular location is the cytoplasm. It carries out the reaction alpha-D-glucosamine 1-phosphate + acetyl-CoA = N-acetyl-alpha-D-glucosamine 1-phosphate + CoA + H(+). It catalyses the reaction N-acetyl-alpha-D-glucosamine 1-phosphate + UTP + H(+) = UDP-N-acetyl-alpha-D-glucosamine + diphosphate. It participates in nucleotide-sugar biosynthesis; UDP-N-acetyl-alpha-D-glucosamine biosynthesis; N-acetyl-alpha-D-glucosamine 1-phosphate from alpha-D-glucosamine 6-phosphate (route II): step 2/2. The protein operates within nucleotide-sugar biosynthesis; UDP-N-acetyl-alpha-D-glucosamine biosynthesis; UDP-N-acetyl-alpha-D-glucosamine from N-acetyl-alpha-D-glucosamine 1-phosphate: step 1/1. Its pathway is bacterial outer membrane biogenesis; LPS lipid A biosynthesis. Functionally, catalyzes the last two sequential reactions in the de novo biosynthetic pathway for UDP-N-acetylglucosamine (UDP-GlcNAc). The C-terminal domain catalyzes the transfer of acetyl group from acetyl coenzyme A to glucosamine-1-phosphate (GlcN-1-P) to produce N-acetylglucosamine-1-phosphate (GlcNAc-1-P), which is converted into UDP-GlcNAc by the transfer of uridine 5-monophosphate (from uridine 5-triphosphate), a reaction catalyzed by the N-terminal domain. The polypeptide is Bifunctional protein GlmU (Clostridioides difficile (strain 630) (Peptoclostridium difficile)).